Consider the following 171-residue polypeptide: uncharacterized protein (171 aa).

Belongs to the mimivirus R24/R907 family.

This is an uncharacterized protein from Acanthamoeba polyphaga (Amoeba).